Consider the following 823-residue polypeptide: Leucine--tRNA ligase (823 aa).

The short motif at 42–52 is the 'HIGH' region element; it reads PYPSGTLHMGH. Residues 575–579 carry the 'KMSKS' region motif; that stretch reads KMSKS. Lys578 contacts ATP.

This sequence belongs to the class-I aminoacyl-tRNA synthetase family.

It localises to the cytoplasm. The enzyme catalyses tRNA(Leu) + L-leucine + ATP = L-leucyl-tRNA(Leu) + AMP + diphosphate. The sequence is that of Leucine--tRNA ligase from Legionella pneumophila (strain Paris).